Reading from the N-terminus, the 361-residue chain is 3-dehydroquinate synthase (361 aa).

NAD(+) contacts are provided by residues 72–77 (SGEKEK), 130–131 (TT), K142, and K151. Zn(2+)-binding residues include E184, H247, and H264.

It belongs to the sugar phosphate cyclases superfamily. Dehydroquinate synthase family. The cofactor is Co(2+). Zn(2+) is required as a cofactor. It depends on NAD(+) as a cofactor.

It localises to the cytoplasm. The enzyme catalyses 7-phospho-2-dehydro-3-deoxy-D-arabino-heptonate = 3-dehydroquinate + phosphate. It participates in metabolic intermediate biosynthesis; chorismate biosynthesis; chorismate from D-erythrose 4-phosphate and phosphoenolpyruvate: step 2/7. Functionally, catalyzes the conversion of 3-deoxy-D-arabino-heptulosonate 7-phosphate (DAHP) to dehydroquinate (DHQ). This chain is 3-dehydroquinate synthase, found in Bacillus cereus (strain ATCC 10987 / NRS 248).